The sequence spans 129 residues: Small ribosomal subunit protein uS11 (129 aa).

Belongs to the universal ribosomal protein uS11 family. In terms of assembly, part of the 30S ribosomal subunit. Interacts with proteins S7 and S18. Binds to IF-3.

Its function is as follows. Located on the platform of the 30S subunit, it bridges several disparate RNA helices of the 16S rRNA. Forms part of the Shine-Dalgarno cleft in the 70S ribosome. This is Small ribosomal subunit protein uS11 from Serratia proteamaculans (strain 568).